Reading from the N-terminus, the 206-residue chain is Large ribosomal subunit protein uL4 (206 aa).

Residues 46–77 (GTRAQKDREQVRHSTKKPFKQKGTGRARAGMT) are disordered. Positions 58–70 (HSTKKPFKQKGTG) are enriched in basic residues.

This sequence belongs to the universal ribosomal protein uL4 family. As to quaternary structure, part of the 50S ribosomal subunit.

In terms of biological role, one of the primary rRNA binding proteins, this protein initially binds near the 5'-end of the 23S rRNA. It is important during the early stages of 50S assembly. It makes multiple contacts with different domains of the 23S rRNA in the assembled 50S subunit and ribosome. Functionally, forms part of the polypeptide exit tunnel. This chain is Large ribosomal subunit protein uL4, found in Polaromonas naphthalenivorans (strain CJ2).